We begin with the raw amino-acid sequence, 1941 residues long: Myosin light chain kinase, smooth muscle (1941 aa).

Ig-like C2-type domains follow at residues 33–122 and 156–244; these read PAFI…VELT and PKFA…AELS. Cys177 and Cys228 are joined by a disulfide. Tyr226 is subject to Phosphotyrosine; by ABL1. The disordered stretch occupies residues 255–329; sequence AVRGTKAPSP…RKVPQSSILQ (75 aa). Residues 286–305 are compositionally biased toward polar residues; the sequence is NCPSPQRSGSSARATNSHLK. Residue Ser295 is modified to Phosphoserine. A compositionally biased stretch (basic and acidic residues) spans 306-320; it reads SPQEPKPKLCEDAPR. Phosphoserine occurs at positions 333 and 355. Ig-like C2-type domains lie at 402 to 485, 502 to 587, 611 to 699, and 709 to 809; these read PRFE…GQVS, PSFS…ATVT, PIFL…AVLT, and PWFI…APPR. Cystine bridges form between Cys423-Cys475 and Cys523-Cys571. Tyr452 bears the Phosphotyrosine; by ABL1 and SRC mark. Cys730 and Cys793 are disulfide-bonded. Tyr780 is subject to Phosphotyrosine; by ABL1. 4 consecutive repeat copies span residues 856 to 883, 884 to 911, 912 to 939, and 940 to 966. The segment at 856–985 is 5 X 28 AA approximate tandem repeats; sequence DVRGLLKRRV…KKSPSENGGN (130 aa). Positions 911–951 are actin-binding (calcium/calmodulin-sensitive); sequence MDFRANLQRQVKPKTISEEERKVHSPQQVDFRSVLAKKGTP. Residues 920-1120 form a disordered region; that stretch reads QVKPKTISEE…KRPESQGSAP (201 aa). Ser935 carries the phosphoserine modification. The tract at residues 936–951 is calmodulin-binding; that stretch reads PQQVDFRSVLAKKGTP. The stretch at 967–985 is one 1-5; truncated repeat; that stretch reads DFRSVLGGKKKSPSENGGN. Tandem repeats lie at residues 990-1002, 1003-1014, 1015-1026, 1027-1038, and 1039-1049. Residues 990-1049 form a 5 X 12 AA approximate tandem repeats region; sequence LNVKAGESPTPAGDAQAIGALKPVGNAKPAETPKPIGNAKPTETLKPVGNTKPAETLKPI. Positions 1048 to 1482 are actin-binding (calcium/calmodulin-insensitive); the sequence is PIANAQPSGS…TVTVNTEQKV (435 aa). Polar residues predominate over residues 1052–1065; the sequence is AQPSGSLKPVTNAQ. Residues 1085 to 1099 show a composition bias toward basic and acidic residues; the sequence is AGKEEVKEVKNDVNC. In terms of domain architecture, Ig-like C2-type 7 spans 1120-1208; that stretch reads PVFKEKLQDV…GQAECSCQVT (89 aa). Cys1141 and Cys1192 are disulfide-bonded. Positions 1212–1257 are disordered; it reads AQTSENTKAPEMKSRRPKSSLPPVLGTESDATVKKKPAPKTPTKAA. The 89-residue stretch at 1260-1348 folds into the Ig-like C2-type 8 domain; the sequence is PQIIQFPEDQ…GSRQAQVNLT (89 aa). A Fibronectin type-III domain is found at 1356–1449; that stretch reads PAGTPCASDI…ESELTAVGEK (94 aa). The segment at 1435-1469 is disordered; it reads SEPSQESELTAVGEKPEEPKDEVEVSDDDEKEPEV. Residues 1453-1467 show a composition bias toward acidic residues; it reads PKDEVEVSDDDEKEP. A Phosphoserine modification is found at Ser1460. The residue at position 1471 (Tyr1471) is a Phosphotyrosine; by ABL1. A Protein kinase domain is found at 1486-1741; the sequence is YDIEERLGSG…CTQCLQHPWL (256 aa). ATP-binding positions include 1492–1500 and Lys1515; that span reads LGSGKFGQV. Tyr1597 is subject to Phosphotyrosine; by ABL1. Asp1607 functions as the Proton acceptor in the catalytic mechanism. Tyr1657 carries the post-translational modification Phosphotyrosine; by ABL1. Residues 1733-1796 are calmodulin-binding; it reads TQCLQHPWLM…SGLSGRKSST (64 aa). A phosphoserine mark is found at Ser1781, Ser1782, Ser1794, Ser1795, and Ser1798. The segment at 1789–1809 is disordered; that stretch reads LSGRKSSTGSPTSPINAEKLE. Residues 1792–1803 are compositionally biased toward polar residues; the sequence is RKSSTGSPTSPI. Thr1800 carries the post-translational modification Phosphothreonine. Residue Ser1801 is modified to Phosphoserine. The 90-residue stretch at 1831–1920 folds into the Ig-like C2-type 9 domain; it reads PYFSKTIRDL…GEATCTAELI (90 aa). An intrachain disulfide couples Cys1852 to Cys1904.

The protein belongs to the protein kinase superfamily. CAMK Ser/Thr protein kinase family. As to quaternary structure, all isoforms including Telokin bind calmodulin. Interacts with CTTN; this interaction is reduced during thrombin-induced endothelial cell (EC) contraction but is promoted by the barrier-protective agonist sphingosine 1-phosphate (S1P) within lamellipodia. A complex made of ABL1, CTTN and MYLK regulates cortical actin-based cytoskeletal rearrangement critical to sphingosine 1-phosphate (S1P)-mediated endothelial cell (EC) barrier enhancement. Binds to NAA10/ARD1. Interacts with SVIL and PTK2B/PYK2. It depends on Mg(2+) as a cofactor. Requires Ca(2+) as cofactor. In terms of processing, can probably be down-regulated by phosphorylation. Tyrosine phosphorylation by ABL1 increases kinase activity, reverses MLCK-mediated inhibition of Arp2/3-mediated actin polymerization, and enhances CTTN-binding. Phosphorylation by SRC at Tyr-452 promotes CTTN binding. The C-terminus is deglutamylated by AGTPBP1/CCP1, AGBL1/CCP4 and AGBL4/CCP6, leading to the formation of Myosin light chain kinase, smooth muscle, deglutamylated form. The consequences of C-terminal deglutamylation are unknown. In terms of tissue distribution, smooth muscle isoform is expressed in all tissues with highest levels in bladder, uterus, vas deferens, colon, ileum, and tracheae. Isoform 1 is expressed in lung, bladder, and vas deferens. Telokin is expressed in smooth muscle cells of the gut, reproductive tract and urinary tract, including in uterus, vas deferens, bladder, colon, kidney, ureter and ovary. Telokin is also detected in the trachea.

The protein localises to the cytoplasm. Its subcellular location is the cell projection. It is found in the lamellipodium. It localises to the cleavage furrow. The protein resides in the cytoskeleton. The protein localises to the stress fiber. The enzyme catalyses L-seryl-[myosin light chain] + ATP = O-phospho-L-seryl-[myosin light chain] + ADP + H(+). It carries out the reaction L-threonyl-[myosin light chain] + ATP = O-phospho-L-threonyl-[myosin light chain] + ADP + H(+). Functionally, calcium/calmodulin-dependent myosin light chain kinase implicated in smooth muscle contraction via phosphorylation of myosin light chains (MLC). Also regulates actin-myosin interaction through a non-kinase activity. Phosphorylates PTK2B/PYK2 and myosin light-chains. Involved in the inflammatory response (e.g. apoptosis, vascular permeability, leukocyte diapedesis), cell motility and morphology, airway hyperreactivity and other activities relevant to asthma. Required for tonic airway smooth muscle contraction that is necessary for physiological and asthmatic airway resistance. Necessary for gastrointestinal motility. Implicated in the regulation of endothelial as well as vascular permeability, probably via the regulation of cytoskeletal rearrangements. In the nervous system it has been shown to control the growth initiation of astrocytic processes in culture and to participate in transmitter release at synapses formed between cultured sympathetic ganglion cells. Critical participant in signaling sequences that result in fibroblast apoptosis. Plays a role in the regulation of epithelial cell survival. Required for epithelial wound healing, especially during actomyosin ring contraction during purse-string wound closure. Mediates RhoA-dependent membrane blebbing. Triggers TRPC5 channel activity in a calcium-dependent signaling, by inducing its subcellular localization at the plasma membrane. Promotes cell migration (including tumor cells) and tumor metastasis. PTK2B/PYK2 activation by phosphorylation mediates ITGB2 activation and is thus essential to trigger neutrophil transmigration during acute lung injury (ALI). May regulate optic nerve head astrocyte migration. Probably involved in mitotic cytoskeletal regulation. Regulates tight junction probably by modulating ZO-1 exchange in the perijunctional actomyosin ring. Mediates burn-induced microvascular barrier injury; triggers endothelial contraction in the development of microvascular hyperpermeability by phosphorylating MLC. Essential for intestinal barrier dysfunction. Mediates Giardia spp.-mediated reduced epithelial barrier function during giardiasis intestinal infection via reorganization of cytoskeletal F-actin and tight junctional ZO-1. Necessary for hypotonicity-induced Ca(2+) entry and subsequent activation of volume-sensitive organic osmolyte/anion channels (VSOAC) in cervical cancer cells. In Mus musculus (Mouse), this protein is Myosin light chain kinase, smooth muscle.